The sequence spans 381 residues: E3 ubiquitin-protein ligase RNF13 (381 aa).

The N-terminal stretch at 1 to 34 (MLLSIGMLMLSATQIYTIVTVQLFAFLNLLPVEA) is a signal peptide. At 35-182 (DILAYNFENG…IPEFSLPLEY (148 aa)) the chain is on the lumenal side. The PA domain occupies 64-160 (LKGFLINSKP…GEASANSLKE (97 aa)). Asparagine 88 carries N-linked (GlcNAc...) asparagine glycosylation. Residues 183–203 (YLIPFLIIVGICLILIVIFMI) traverse the membrane as a helical segment. At 204-381 (TKFVQDRHRA…ERDYRVTNTV (178 aa)) the chain is on the cytoplasmic side. An RING-type; atypical zinc finger spans residues 240-282 (CAICLDEYEDGDKLRILPCSHAYHCKCVDPWLTKTKKTCPVCK). The interval 285 to 381 (VVPSQGDSDS…ERDYRVTNTV (97 aa)) is disordered. Composition is skewed to acidic residues over residues 292–305 (SDSE…ENEV) and 339–353 (SEYE…DSSD). The span at 370-381 (NDERDYRVTNTV) shows a compositional bias: basic and acidic residues.

In terms of tissue distribution, widely expressed (at protein level). Lowest levels in the liver, moderate levels in the heart, intestine and spleen, and high levels in skeletal muscle, kidney, proventriculus and brain. Also expressed in inner ear after noise exposure.

Its subcellular location is the endoplasmic reticulum membrane. The protein resides in the late endosome membrane. It localises to the lysosome membrane. The protein localises to the nucleus inner membrane. The catalysed reaction is S-ubiquitinyl-[E2 ubiquitin-conjugating enzyme]-L-cysteine + [acceptor protein]-L-lysine = [E2 ubiquitin-conjugating enzyme]-L-cysteine + N(6)-ubiquitinyl-[acceptor protein]-L-lysine.. The protein operates within protein modification; protein ubiquitination. Its function is as follows. E3 ubiquitin-protein ligase that regulates cell proliferation. Involved in apoptosis regulation. Mediates ER stress-induced activation of JNK signaling pathway and apoptosis by promoting ERN1 activation and splicing of XBP1 mRNA. In Gallus gallus (Chicken), this protein is E3 ubiquitin-protein ligase RNF13.